The primary structure comprises 291 residues: Serine hydrolase BPHL (291 aa).

The first 37 residues, methionine 1–threonine 37, serve as a signal peptide directing secretion. An AB hydrolase-1 domain is found at alanine 62–aspartate 181. N6-acetyllysine is present on residues lysine 86 and lysine 119. Lysine 126 is subject to N6-acetyllysine; alternate. The residue at position 126 (lysine 126) is an N6-succinyllysine; alternate. Serine 139 serves as the catalytic Nucleophile. Position 184 is an N6-succinyllysine (lysine 184). At lysine 191 the chain carries N6-acetyllysine; alternate. Residue lysine 191 is modified to N6-succinyllysine; alternate. Lysine 217 is modified (N6-acetyllysine). Aspartate 221 lines the Mg(2+) pocket. Lysine 243 bears the N6-acetyllysine mark. The active-site Charge relay system is the aspartate 244. 2 positions are modified to N6-acetyllysine; alternate: lysine 260 and lysine 271. Residues lysine 260 and lysine 271 each carry the N6-succinyllysine; alternate modification. Histidine 272 functions as the Charge relay system in the catalytic mechanism.

This sequence belongs to the AB hydrolase superfamily. Lipase family. Monomer. May also form homodimers. Expressed at high levels in liver and kidney and lower levels in heart, intestine and skeletal muscle.

The protein localises to the mitochondrion. The catalysed reaction is L-homocysteine thiolactone + H2O = L-homocysteine + H(+). The enzyme catalyses valacyclovir + H2O = acyclovir + L-valine + H(+). Specific alpha-amino acid ester serine hydrolase that prefers small, hydrophobic, and aromatic side chains and does not have a stringent requirement for the leaving group other than preferring a primary alcohol. Has homocysteine-thiolactonase activity (in vitro) and may play a significant role in the detoxification of homocysteine thiolactone in vivo. Catalyzes the hydrolytic activation of amino acid ester prodrugs of nucleoside analogs such as valacyclovir and valganciclovir, converting them into their active forms (acyclovir and ganciclovir). The polypeptide is Serine hydrolase BPHL (BPHL) (Homo sapiens (Human)).